A 51-amino-acid chain; its full sequence is MARNKPLAKKLRLAKAAKQNRRVPVWVIVKTNRKVMTHPKRRMWRRTKLKE.

Belongs to the eukaryotic ribosomal protein eL39 family.

The polypeptide is Large ribosomal subunit protein eL39 (Thermococcus onnurineus (strain NA1)).